An 804-amino-acid polypeptide reads, in one-letter code: MRVLWVLGLCCVLLTFGFVRADDEVDVDGTVEEDLGKSREGSRTDDEVVQREEEAIQLDGLNASQIRELREKSEKFAFQAEVNRMMKLIINSLYKNKEIFLRELISNASDALDKIRLISLTDENALAGNEELTVKIKCDREKNLLHVTDTGVGMTREELVKNLGTIAKSGTSEFLNKMTEAQEDGQSTSELIGQFGVGFYSAFLVADKVIVTSKHNNDTQHIWESDSNEFSVIADPRGNTLGRGTTITLVLKEEASDYLELDTIKNLVRKYSQFINFPIYVWSSKTETVEEPLEEDETAQEEKEEADDEAAVEEEEEEKKPKTKKVEKTVWDWELMNDIKPIWQRPSKEVEEDEYKAFYKSFSKESDDPMAYIHFTAEGEVTFKSILFVPTSAPRGLFDEYGSKKSDYIKLYVRRVFITDDFHDMMPKYLNFVKGVVDSDDLPLNVSRETLQQHKLLKVIRKKLVRKTLDMIKKIADEKYNDTFWKEFGTNIKLGVIEDHSNRTRLAKLLRFQSSHHSTDITSLDQYVERMKEKQDKIYFMAGSSRKEAESSPFVERLLKKGYEVIYLTEPVDEYCIQALPEFDGKRFQNVAKEGVKFDESEKSKESREATEKEFEPLLNWMKDKALKDKIEKAVVSQRLTESPCALVASQYGWSGNMERIMKAQAYQTGKDISTNYYASQKKTFEINPRHPLIRDMLRRVKEDEDDKTVMDLAVVLFETATLRSGYLLPDTKAYGDRIERMLRLSLNIDPEAQVEEEPEEEPEDTTEDTTDDSEQDEEETDAGAEEEEEEQETEKEPTEKDEL.

A signal peptide spans 1–21; it reads MRVLWVLGLCCVLLTFGFVRA. The short motif at 42–44 is the SRT pseudosubstrate motif element; that stretch reads SRT. N-linked (GlcNAc...) asparagine glycosylation occurs at Asn62. The residue at position 64 (Ser64) is a Phosphoserine. Asn107 is a glycosylation site (N-linked (GlcNAc...) asparagine). Asn107, Asp149, and Asn162 together coordinate ATP. At Lys168 the chain carries N6-(2-hydroxyisobutyryl)lysine. Ser172 carries the phosphoserine modification. Phe199 is an ATP binding site. N-linked (GlcNAc...) asparagine glycosylation is present at Asn217. The segment at 288–323 is disordered; it reads TVEEPLEEDETAQEEKEEADDEAAVEEEEEEKKPKT. Residues 289–317 show a composition bias toward acidic residues; the sequence is VEEPLEEDETAQEEKEEADDEAAVEEEEE. Ser403 is subject to Phosphoserine. Lys404 carries the post-translational modification N6-succinyllysine. Asn445 is a glycosylation site (N-linked (GlcNAc...) asparagine). Ser447 carries the post-translational modification Phosphoserine. N6-acetyllysine is present on Lys479. Asn481 and Asn502 each carry an N-linked (GlcNAc...) asparagine glycan. Lys633 bears the N6-succinyllysine mark. Residues 749–804 are disordered; it reads IDPEAQVEEEPEEEPEDTTEDTTDDSEQDEEETDAGAEEEEEEQETEKEPTEKDEL. Positions 753-794 are enriched in acidic residues; that stretch reads AQVEEEPEEEPEDTTEDTTDDSEQDEEETDAGAEEEEEEQET. The segment covering 795-804 has biased composition (basic and acidic residues); it reads EKEPTEKDEL. The Prevents secretion from ER signature appears at 801–804; it reads KDEL.

This sequence belongs to the heat shock protein 90 family. Homodimer; disulfide-linked. Component of an EIF2 complex at least composed of CELF1/CUGBP1, CALR, CALR3, EIF2S1, EIF2S2, HSP90B1 and HSPA5. Part of a large chaperone multiprotein complex comprising DNAJB11, HSP90B1, HSPA5, HYOU, PDIA2, PDIA4, PDIA6, PPIB, SDF2L1, UGGT1 and very small amounts of ERP29, but not, or at very low levels, CALR nor CANX. Interacts with AIMP1; regulates its retention in the endoplasmic reticulum. Hyperglycosylated form interacts with OS9; promoting its degradation by the endoplasmic reticulum associated degradation (ERAD). Interacts with CNPY3. This interaction is disrupted in the presence of ATP. Interacts with TLR4 and TLR9, but not with TLR3. Interacts with MZB1 in a calcium-dependent manner. Interacts with METTL23. Interacts with IL1B; the interaction facilitates cargo translocation into the ERGIC. Interacts with EIF2AK3. In terms of processing, phosphorylated by CK2. N-glycosylated cotranslationally at Asn-217 by STT3A-containing OST-A complex: this glycosylation is constitutive. In response to various stress, 5 additional facultative sites (Asn-62, Asn-107, Asn-445, Asn-481 and Asn-502) can be glycosylated post-translationally by STT3B-containing OST-B complex, leading to a hyperglycosylated form that is degraded by the ER-associated degradation (ERAD) pathway. In normal conditions, the OST-A complex together with CCDC134 prevent glycosylation at facultative sites during protein folding, thereby preventing hyperglycosylation. Mechanistically, nascent HSP90B1 is tethered during translation to a specialized CCDC134-containing translocon that forms a microenvironment for its folding, in which STT3A associates with the SRT pseudosubstrate motif, and prevents access to facultative glycosylation sites until folding is completed, rendering its facultative sites inaccessible to the OST-B complex.

It is found in the endoplasmic reticulum lumen. Its subcellular location is the sarcoplasmic reticulum lumen. The protein resides in the melanosome. The enzyme catalyses ATP + H2O = ADP + phosphate + H(+). In terms of biological role, ATP-dependent chaperone involved in the processing of proteins in the endoplasmic reticulum, regulating their transport. Together with MESD, acts as a modulator of the Wnt pathway by promoting the folding of LRP6, a coreceptor of the canonical Wnt pathway. When associated with CNPY3, required for proper folding of Toll-like receptors. Promotes folding and trafficking of TLR4 to the cell surface. May participate in the unfolding of cytosolic leaderless cargos (lacking the secretion signal sequence) such as the interleukin 1/IL-1 to facilitate their translocation into the ERGIC (endoplasmic reticulum-Golgi intermediate compartment) and secretion; the translocation process is mediated by the cargo receptor TMED10. This Rattus norvegicus (Rat) protein is Endoplasmin.